The following is a 116-amino-acid chain: Host cell factor C1 regulator 1 (116 aa).

Residues 1–22 (MILQQPLERGPPGRDPRATTGV) are disordered. The tract at residues 54-57 (DHPY) is interaction with HCFC1. The Nuclear export signal signature appears at 88–97 (IPEALRLLRL).

In terms of assembly, interacts with HCFC1.

Its subcellular location is the cytoplasm. It localises to the nucleus. Regulates HCFC1 activity by modulating its subcellular localization. Overexpression of HCFC1R1 leads to accumulation of HCFC1 in the cytoplasm. HCFC1R1-mediated export may provide the pool of cytoplasmic HCFC1 required for import of virion-derived VP16 into the nucleus. In Rattus norvegicus (Rat), this protein is Host cell factor C1 regulator 1 (Hcfc1r1).